The primary structure comprises 325 residues: Cytochrome c1, heme protein, mitochondrial (325 aa).

Residues 1–84 (MAAAAASLRR…AVALHSAVSA (84 aa)) constitute a mitochondrion transit peptide. The Mitochondrial intermembrane segment spans residues 85–287 (SDLELHPPSY…SEPEHDHRKR (203 aa)). The 102-residue stretch at 108–209 (TSIRRGFQVY…IVRARHGGED (102 aa)) folds into the Cytochrome c domain. Heme c is bound by residues Cys-121, Cys-124, His-125, and Met-244. Residues 288–308 (MGLKMLLMMGLLLPLTYAMKR) form a helical membrane-spanning segment. The Mitochondrial matrix portion of the chain corresponds to 309–325 (HKWSVLKSRKLAYRPPK).

This sequence belongs to the cytochrome c family. As to quaternary structure, component of the ubiquinol-cytochrome c oxidoreductase (cytochrome b-c1 complex, complex III, CIII), a multisubunit enzyme composed of 11 subunits. The complex is composed of 3 respiratory subunits cytochrome b, cytochrome c1 and Rieske protein UQCRFS1, 2 core protein subunits UQCRC1/QCR1 and UQCRC2/QCR2, and 6 low-molecular weight protein subunits UQCRH/QCR6, UQCRB/QCR7, UQCRQ/QCR8, UQCR10/QCR9, UQCR11/QCR10 and subunit 9, the cleavage product of Rieske protein UQCRFS1. The complex exists as an obligatory dimer and forms supercomplexes (SCs) in the inner mitochondrial membrane with NADH-ubiquinone oxidoreductase (complex I, CI) and cytochrome c oxidase (complex IV, CIV), resulting in different assemblies (supercomplex SCI(1)III(2)IV(1) and megacomplex MCI(2)III(2)IV(2)). Interacts with FLVCR2; this interaction occurs in the absence of heme and is disrupted upon heme binding. The cofactor is heme c.

Its subcellular location is the mitochondrion inner membrane. The catalysed reaction is a quinol + 2 Fe(III)-[cytochrome c](out) = a quinone + 2 Fe(II)-[cytochrome c](out) + 2 H(+)(out). In terms of biological role, component of the ubiquinol-cytochrome c oxidoreductase, a multisubunit transmembrane complex that is part of the mitochondrial electron transport chain which drives oxidative phosphorylation. The respiratory chain contains 3 multisubunit complexes succinate dehydrogenase (complex II, CII), ubiquinol-cytochrome c oxidoreductase (cytochrome b-c1 complex, complex III, CIII) and cytochrome c oxidase (complex IV, CIV), that cooperate to transfer electrons derived from NADH and succinate to molecular oxygen, creating an electrochemical gradient over the inner membrane that drives transmembrane transport and the ATP synthase. The cytochrome b-c1 complex catalyzes electron transfer from ubiquinol to cytochrome c, linking this redox reaction to translocation of protons across the mitochondrial inner membrane, with protons being carried across the membrane as hydrogens on the quinol. In the process called Q cycle, 2 protons are consumed from the matrix, 4 protons are released into the intermembrane space and 2 electrons are passed to cytochrome c. Cytochrome c1 is a catalytic core subunit containing a c-type heme. It transfers electrons from the [2Fe-2S] iron-sulfur cluster of the Rieske protein to cytochrome c. The polypeptide is Cytochrome c1, heme protein, mitochondrial (Cyc1) (Mus musculus (Mouse)).